We begin with the raw amino-acid sequence, 359 residues long: MTNIEVKTRVKQYQIKIMINSLHHLGTLVTKVWCARQVAVVTDTNVGPYYAKLVTDELTAAGFKVRVMTVPAGEESKSWSQVQSLIDQLSAAHFSRSDGVLALGGGVVGDLAGFVASIYMRGIALIQVPTSLLAQVDSSVGGKTAIDLPTGKNLVGSFYQPDLVVIDPAILVTLPPRMLAEGYGEIVKCAALVGGDFWQSLHQITSVAAILPAAPDLIAASVAFKARVVMADEHEQGQRQLLNFGHTIGHAVELLADGQLMHGEAVAIGLVQVCRLFAAHGLAPTSLTSTLKARLMAVGLPTELPPIAPQAVAAVMQHDKKVHGTALTWVYLSAVGQPHLYPIAVTDLATWMGDLWSVS.

NAD(+) is bound by residues 106-110 (GVVGD), 130-131 (TS), Lys143, and Lys152. Zn(2+) contacts are provided by Glu185, His246, and His262.

It belongs to the sugar phosphate cyclases superfamily. Dehydroquinate synthase family. The cofactor is NAD(+). Co(2+) serves as cofactor. Zn(2+) is required as a cofactor.

The protein resides in the cytoplasm. The enzyme catalyses 7-phospho-2-dehydro-3-deoxy-D-arabino-heptonate = 3-dehydroquinate + phosphate. Its pathway is metabolic intermediate biosynthesis; chorismate biosynthesis; chorismate from D-erythrose 4-phosphate and phosphoenolpyruvate: step 2/7. In terms of biological role, catalyzes the conversion of 3-deoxy-D-arabino-heptulosonate 7-phosphate (DAHP) to dehydroquinate (DHQ). The protein is 3-dehydroquinate synthase of Lactiplantibacillus plantarum (strain ATCC BAA-793 / NCIMB 8826 / WCFS1) (Lactobacillus plantarum).